Reading from the N-terminus, the 114-residue chain is Gas vesicle protein J (114 aa).

Residues 63–114 (PTGTDMERVEEAAGISPDESRSLDTRSESEQMDELPGEAGASVSNTAPQEEE) are disordered. Residues 80-91 (DESRSLDTRSES) show a composition bias toward basic and acidic residues. The span at 104–114 (SVSNTAPQEEE) shows a compositional bias: polar residues.

This sequence belongs to the gas vesicle GvpA family. As to quaternary structure, gvpF to GvpM interact with each other in vitro, and may form multi-subunit complex(es). Interacts with GvpA.

The protein localises to the gas vesicle. Functionally, a minor component of the gas vesicle, proteins GvpF to GvpM might be involved in nucleating gas vesicle formation. Gas vesicles are hollow, gas filled proteinaceous nanostructures found in some microorganisms. They allow positioning of halobacteria at the optimal depth for growth in the poorly aerated, shallow brine pools of their habitat. Its function is as follows. Expression of a 9.5 kb mc-vac DNA fragment containing 2 divergently transcribed regions (gvpD-gvpE-gvpF-gvpG-gvpH-gvpI-gvpJ-gvpK-gvpL-gvpM and gvpA-gvpC-gvpN-gvpO) allows H.volcanii to produce gas vesicles. In Haloferax mediterranei (strain ATCC 33500 / DSM 1411 / JCM 8866 / NBRC 14739 / NCIMB 2177 / R-4) (Halobacterium mediterranei), this protein is Gas vesicle protein J.